Reading from the N-terminus, the 76-residue chain is Sec-independent protein translocase protein TatA (76 aa).

The chain crosses the membrane as a helical span at residues 1–21; it reads MGGLSIWHWLIVLLIVALVFG. The tract at residues 40–76 is disordered; sequence KDGMKEGETPADAQQLPRTGTVDVNAKETTRSDSNKA. The segment covering 64-76 has biased composition (basic and acidic residues); it reads NAKETTRSDSNKA.

It belongs to the TatA/E family. As to quaternary structure, the Tat system comprises two distinct complexes: a TatABC complex, containing multiple copies of TatA, TatB and TatC subunits, and a separate TatA complex, containing only TatA subunits. Substrates initially bind to the TatABC complex, which probably triggers association of the separate TatA complex to form the active translocon.

It is found in the cell inner membrane. In terms of biological role, part of the twin-arginine translocation (Tat) system that transports large folded proteins containing a characteristic twin-arginine motif in their signal peptide across membranes. TatA could form the protein-conducting channel of the Tat system. The polypeptide is Sec-independent protein translocase protein TatA (Burkholderia ambifaria (strain MC40-6)).